The chain runs to 420 residues: Subtilisin (420 aa).

An N-terminal signal peptide occupies residues 1–31; sequence MKRSGKIFTTAMLAVTLMMPAMGVSANEGNA. The propeptide occupies 32 to 111; that stretch reads AAEGNEKFRV…DKPEALYNAM (80 aa). Glutamine 115 contacts Ca(2+). The 303-residue stretch at 118–420 folds into the Peptidase S8 domain; sequence PWGIKAIYNN…ASGFGFATVQ (303 aa). Aspartate 145 acts as the Charge relay system in catalysis. Position 154 (aspartate 154) interacts with Ca(2+). Catalysis depends on charge relay system residues histidine 182 and serine 360.

Belongs to the peptidase S8 family. Ca(2+) serves as cofactor.

It localises to the secreted. The enzyme catalyses Hydrolysis of proteins with broad specificity for peptide bonds, and a preference for a large uncharged residue in P1. Hydrolyzes peptide amides.. Subtilisin is an extracellular alkaline serine protease, it catalyzes the hydrolysis of proteins and peptide amides. The protein is Subtilisin (sub1) of Bacillus sp. (strain TA39).